A 72-amino-acid polypeptide reads, in one-letter code: Translation initiation factor IF-1 (72 aa).

Residues 1–72 (MAKEGAIEVE…TRGRIVYRYK (72 aa)) enclose the S1-like domain.

Belongs to the IF-1 family. In terms of assembly, component of the 30S ribosomal translation pre-initiation complex which assembles on the 30S ribosome in the order IF-2 and IF-3, IF-1 and N-formylmethionyl-tRNA(fMet); mRNA recruitment can occur at any time during PIC assembly.

The protein resides in the cytoplasm. One of the essential components for the initiation of protein synthesis. Stabilizes the binding of IF-2 and IF-3 on the 30S subunit to which N-formylmethionyl-tRNA(fMet) subsequently binds. Helps modulate mRNA selection, yielding the 30S pre-initiation complex (PIC). Upon addition of the 50S ribosomal subunit IF-1, IF-2 and IF-3 are released leaving the mature 70S translation initiation complex. The chain is Translation initiation factor IF-1 from Corynebacterium efficiens (strain DSM 44549 / YS-314 / AJ 12310 / JCM 11189 / NBRC 100395).